The sequence spans 1137 residues: Otoancorin (1137 aa).

The N-terminal stretch at 1–23 (MSQGPRTCSLLLVLLLSHGGAYQ) is a signal peptide. N-linked (GlcNAc...) asparagine glycans are attached at residues asparagine 156, asparagine 211, asparagine 244, asparagine 289, asparagine 321, asparagine 380, asparagine 384, asparagine 530, asparagine 594, asparagine 740, and asparagine 798. Over residues 1095–1115 (HSWQTDPLSSSPTWPASTGSP) the composition is skewed to polar residues. The disordered stretch occupies residues 1095-1119 (HSWQTDPLSSSPTWPASTGSPTGEP). A lipid anchor (GPI-anchor amidated glycine) is attached at glycine 1113. The propeptide at 1114–1137 (SPTGEPASQALWLGCTLLLLTAKS) is removed in mature form.

The protein belongs to the stereocilin family. As to expression, expressed in the inner ear and vestibule.

The protein localises to the apical cell membrane. It localises to the secreted. Its subcellular location is the extracellular space. The protein resides in the extracellular matrix. May act as an adhesion molecule. The chain is Otoancorin (Otoa) from Mus musculus (Mouse).